The chain runs to 1205 residues: MGDQQLYKTNHVGHGGENLFYQQPPLGVHSGLGHSYGNTISGAGMDAPQASPISPHFPQDTRDGLGLPIGSKNLGQMDTSRQGGWGSHAGPGNHVQLRSNLANSNMMWGTPTQVEPADGYQYTYSQASEIRTQKLTSGVLHKLDSFTQVFANQNLRIQVNNMAQVLHTQSAVMDGASDSALRQLLSQKPVEPSASAIASRYQQVPQQPHPGFTGGLPKPALPVGQHAPQGHLYYDYQQPLAQMSMQGGQPLQAPQVLSGHMQQLQQHQYYPQPPPQQQQAGLQRISVQEMQQQQQPQQIRPSPPQQQQQLQLQQRQSSLQIPQYYQPQPMMQHLQEQQQPSMHLQPPSYHRDPHQYTPEQAHAVQLIQLGSMPQYYYQEPQQAYSHPLYPQSHLSQHQQREDGQLKTYSSDRQTPAMLSSHGDMGTSDTGVADPASSEMTRVTSTLPHQPLLSPSGIHLNNMGSQHQQPPSPSAMWPQMHLPDGRAQSGSPESSSGQTKGVFGEQFDAKNKLTCSICLKEFKSLPALNGHMRSHGGMRASPSLKQEEGEKAPPPQPQPQPQPQQPLPPPPPPPPPPQLPPEAERLTPMVMPVSVPVKLIPPKPSSQGFTNSVAATPAARDKPASSMSDDEMPVLEIPRKHPPIAAKVEEPLKNLPEKKKFRHRPEPLFIPPPPSSYTPNPTSYSGATLYQSQLRSPRILGDHLLLDPAHELPPYTPPPMLSPVRQGSGLFSNVLISGHGPGVHPQLPLTPLTPTPRVLLCRSSSIDGSNVTVTPGPGEQTVDVEPRINIGLRFQAEIPELQDVSALAQDTHRATLVWKPWPELENQALQQQVENLLNLCCSSALPGGGTNSEFALHSLFEAKGDVMATLEMLLLRKPVRLKCHPLANYHYAGSDKWTSLERKLFNKALATYSKDFIFVQKMVKSKTVAQCVEYYYTWKKIMRLGRKHRTRLAEIIDDCMTSEEEEEAEEEEEDPEEDRKSIKEEESEVAKSPEPPPAPALAPTEGPPMQAVGQQPSGNFICEMPNCGAVFSSRQALNGHARIHGGTNQVAKTRGAIPSGKQKPGGTQSGYCSVKSSPSHSTTSGETDPTTIFPCKECGKVFFKIKSRNAHMKTHRQQEEQQRQKAQKAAFAAEMAATIERTTGPVGAPELLPLDQLSLMKPVKDVDILDDDVVQQLGVMDEAEVVGTDLLLDDQDSVLLQGDTEL.

6 disordered regions span residues 201–226 (YQQVPQQPHPGFTGGLPKPALPVGQH), 270–317 (YPQP…QRQS), 332–351 (QHLQEQQQPSMHLQPPSYHR), 390–500 (PQSH…QTKG), 527–583 (LNGH…PEAE), and 601–629 (PKPSSQGFTNSVAATPAARDKPASSMSDD). Low complexity-rich tracts occupy residues 291–317 (QQQQQPQQIRPSPPQQQQQLQLQQRQS) and 332–342 (QHLQEQQQPSM). Polar residues-rich tracts occupy residues 406 to 417 (KTYSSDRQTPAM), 437 to 447 (SEMTRVTSTLP), and 487 to 498 (QSGSPESSSGQT). S490 bears the Phosphoserine mark. A C2H2-type 1 zinc finger spans residues 512–534 (LTCSICLKEFKSLPALNGHMRSH). Pro residues predominate over residues 551 to 579 (APPPQPQPQPQPQQPLPPPPPPPPPPQLP). Residues 604 to 613 (SSQGFTNSVA) are compositionally biased toward polar residues. Residues K639 and K646 each carry the N6-acetyllysine modification. Position 773 is a phosphothreonine (T773). In terms of domain architecture, ELM2 spans 785-876 (PRINIGLRFQ…ATLEMLLLRK (92 aa)). The SANT domain occupies 891–942 (AGSDKWTSLERKLFNKALATYSKDFIFVQKMVKSKTVAQCVEYYYTWKKIMR). Residues 956 to 975 (DDCMTSEEEEEAEEEEEDPE) are compositionally biased toward acidic residues. 2 disordered regions span residues 956 to 1016 (DDCM…QQPS) and 1043 to 1087 (HGGT…GETD). T960 is modified (phosphothreonine). S961 carries the post-translational modification Phosphoserine. The segment covering 976-990 (EDRKSIKEEESEVAK) has biased composition (basic and acidic residues). The segment at 1019 to 1043 (FICEMPNCGAVFSSRQALNGHARIH) adopts a C2H2-type 2 zinc-finger fold. Over residues 1072 to 1086 (SVKSSPSHSTTSGET) the composition is skewed to low complexity. Residues 1092–1114 (FPCKECGKVFFKIKSRNAHMKTH) form a C2H2-type 3 zinc finger.

As to quaternary structure, interacts with CREBBP and EP300. Interacts with DNTTIP1 and DNTT. In terms of tissue distribution, highly expressed in kidney, lung and brain. In the brain, expression was seen in the basal ganglia, hippocampus, piriform cortex, cerebral cortex, ventromedial nucleus of the hypothalamus and the dorsal and superior central nuclei of the raphe.

The protein localises to the nucleus. Binds DNA and activates transcription of CYP11A1. Interaction with CREBBP and EP300 results in a synergistic transcriptional activation of CYP11A1. This chain is Transcriptional-regulating factor 1 (Trerf1), found in Mus musculus (Mouse).